The sequence spans 362 residues: Trans-enoyl reductase phm4 (362 aa).

50-53 (VDAK) lines the NADP(+) pocket. 136 to 143 (TCFMTCGL) lines the substrate pocket. Residues 171 to 174 (ATAT), 194 to 197 (SPHS), Y212, and 259 to 260 (LD) contribute to the NADP(+) site. 280–284 (GPIML) contributes to the substrate binding site. NADP(+) is bound at residue 349–350 (VN).

The protein belongs to the zinc-containing alcohol dehydrogenase family. In terms of assembly, monomer.

The protein operates within secondary metabolite biosynthesis. Trans-enoyl reductase; part of the gene cluster that mediates the biosynthesis of the trans-fused decalin-containing tetramic acid phomasetin, the stereochemical opposite of the HIV-1 integrase inhibitor equisetin. The PKS module of phm1 together with the enoylreductase phm4 catalyze the formation of the polyketide unit which is then conjugated to L-serine by the condensation domain of the phm1 NRPS module. Activity of the Dieckmann cyclase domain (RED) of phm1 results in release of the Dieckmann product intermediate. The Diels-Alderase phm7 then uses the Dieckmann product of phm1 as substrate and catalyzes the Diels-Alder cycloaddition to form the decalin ring of N-desmethylphomasetin. N-desmethylphomasetin is further methylated to phomasetin by the methyltransferase phm5. This chain is Trans-enoyl reductase phm4, found in Pyrenochaetopsis sp.